An 87-amino-acid polypeptide reads, in one-letter code: CRISPR-associated endoribonuclease Cas2 (87 aa).

Mg(2+) is bound at residue Asp8.

It belongs to the CRISPR-associated endoribonuclease Cas2 protein family. In terms of assembly, homodimer, forms a heterotetramer with a Cas1 homodimer. Mg(2+) serves as cofactor.

Functionally, CRISPR (clustered regularly interspaced short palindromic repeat), is an adaptive immune system that provides protection against mobile genetic elements (viruses, transposable elements and conjugative plasmids). CRISPR clusters contain sequences complementary to antecedent mobile elements and target invading nucleic acids. CRISPR clusters are transcribed and processed into CRISPR RNA (crRNA). Functions as a ssRNA-specific endoribonuclease. Involved in the integration of spacer DNA into the CRISPR cassette. The chain is CRISPR-associated endoribonuclease Cas2 from Methanosarcina acetivorans (strain ATCC 35395 / DSM 2834 / JCM 12185 / C2A).